Reading from the N-terminus, the 436-residue chain is GTPase Der (436 aa).

EngA-type G domains follow at residues 4-167 (PTIA…PAQE) and 175-351 (IKFS…ESQN). Residues 10 to 17 (GRPNVGKS), 57 to 61 (DTGGI), 119 to 122 (NKVD), 181 to 188 (GRPNVGKS), 229 to 233 (DTAGM), and 294 to 297 (NKWD) contribute to the GTP site. Residues 352–436 (TRIPSAVLND…PIHLIARKRK (85 aa)) enclose the KH-like domain.

It belongs to the TRAFAC class TrmE-Era-EngA-EngB-Septin-like GTPase superfamily. EngA (Der) GTPase family. Associates with the 50S ribosomal subunit.

Functionally, GTPase that plays an essential role in the late steps of ribosome biogenesis. The sequence is that of GTPase Der from Streptococcus suis (strain 98HAH33).